The chain runs to 414 residues: Na(+)/H(+) antiporter NhaA (414 aa).

The next 11 membrane-spanning stretches (helical) occupy residues 22–42 (VGGFLLIGGALTALIWANSPF), 61–81 (LHLTVEAWVADGLLAIFFFVV), 101–121 (MLPIVAAVCGMAVPALIYAAF), 131–151 (GWGIPMATDIAFAVAILAVVG), 171–191 (LGAIIVIAVFYTASLSFLPLI), 215–235 (SAALPNWVVYLPLAGVIWALV), 239–259 (GVHATIAGVAMGLLMRTVPLA), 281–301 (VLPVFAVMSAGVVFAGGLGAV), 308–328 (LGIIAGLVVGKTVGIAGGSWV), 343–363 (WIDITGMALLAGIGFTVSLLI), and 379–399 (KAGVLLASLLATVLGAVVLAV).

Belongs to the NhaA Na(+)/H(+) (TC 2.A.33) antiporter family.

It localises to the cell membrane. The catalysed reaction is Na(+)(in) + 2 H(+)(out) = Na(+)(out) + 2 H(+)(in). Its function is as follows. Na(+)/H(+) antiporter that extrudes sodium in exchange for external protons. The polypeptide is Na(+)/H(+) antiporter NhaA (Thermobifida fusca (strain YX)).